Reading from the N-terminus, the 610-residue chain is UvrABC system protein C (610 aa).

The GIY-YIG domain maps to 16–94 (SQPGVYSMYD…IKLYQPRYNV (79 aa)). The UVR domain occupies 204 to 239 (QQVLNQLVERMELASRALNFEDAAHARDQIQAVRRV).

Belongs to the UvrC family. Interacts with UvrB in an incision complex.

The protein resides in the cytoplasm. Functionally, the UvrABC repair system catalyzes the recognition and processing of DNA lesions. UvrC both incises the 5' and 3' sides of the lesion. The N-terminal half is responsible for the 3' incision and the C-terminal half is responsible for the 5' incision. This chain is UvrABC system protein C, found in Sodalis glossinidius (strain morsitans).